A 532-amino-acid chain; its full sequence is Putative cysteine ligase BshC (532 aa).

The stretch at 431-451 forms a coiled coil; that stretch reads MAQAKDALAKVDASLVEAAER.

The protein belongs to the BshC family.

The polypeptide is Putative cysteine ligase BshC (Koribacter versatilis (strain Ellin345)).